Here is a 454-residue protein sequence, read N- to C-terminus: Putative tyrosine kinase 36 (454 aa).

Residues 80–88 (LGSGSFGKV) and lysine 98 each bind ATP. The active-site Proton acceptor is the aspartate 192.

This sequence belongs to the protein kinase superfamily. Tyr protein kinase family.

It carries out the reaction L-tyrosyl-[protein] + ATP = O-phospho-L-tyrosyl-[protein] + ADP + H(+). This is Putative tyrosine kinase 36 (36) from Alcelaphine herpesvirus 1 (strain C500) (AlHV-1).